A 330-amino-acid chain; its full sequence is Mucin-15 (330 aa).

An N-terminal signal peptide occupies residues 1–23 (MLTSAKILLISILSSLLLFGSHG). Residues 23–115 (GEEGQKTNTT…SPRSPSTHSF (93 aa)) form a disordered region. Topologically, residues 24–232 (EEGQKTNTTE…SDPQEENRNT (209 aa)) are extracellular. Residues asparagine 30, asparagine 44, asparagine 54, asparagine 71, asparagine 79, asparagine 89, asparagine 94, asparagine 122, asparagine 138, asparagine 147, asparagine 154, asparagine 162, asparagine 175, asparagine 214, and asparagine 221 are each glycosylated (N-linked (GlcNAc...) asparagine). Over residues 42-56 (MENQSVPLESKANLT) the composition is skewed to polar residues. Residues 86 to 115 (FYSNLSTDNSSRSPSLMPTLSPRSPSTHSF) are compositionally biased toward polar residues. Residues 164–185 (SITVSNLPSGPNTTSVTPMVTE) are disordered. A helical membrane pass occupies residues 233 to 253 (GVVFGAILGAILGASLLSLVG). Over 254-330 (YLLCGKRKTD…DDIPPLRTSV (77 aa)) the chain is Cytoplasmic. The interval 279 to 330 (LRLDNAPEPYDMSFGNSSYYNPTANDSSTSAGGENAHDSIPMDDIPPLRTSV) is disordered. Over residues 292–310 (FGNSSYYNPTANDSSTSAG) the composition is skewed to polar residues.

Post-translationally, highly glycosylated (N- and O-linked carbohydrates). As to expression, mainly expressed on apical surfaces of the mammary epithelial cells.

It localises to the cell membrane. It is found in the secreted. The sequence is that of Mucin-15 (MUC15) from Bos taurus (Bovine).